The primary structure comprises 156 residues: Small ribosomal subunit protein uS7 (156 aa).

This sequence belongs to the universal ribosomal protein uS7 family. Part of the 30S ribosomal subunit. Contacts proteins S9 and S11.

In terms of biological role, one of the primary rRNA binding proteins, it binds directly to 16S rRNA where it nucleates assembly of the head domain of the 30S subunit. Is located at the subunit interface close to the decoding center, probably blocks exit of the E-site tRNA. This chain is Small ribosomal subunit protein uS7, found in Heliobacterium modesticaldum (strain ATCC 51547 / Ice1).